The following is a 423-amino-acid chain: Gamma-glutamyl phosphate reductase (423 aa).

This sequence belongs to the gamma-glutamyl phosphate reductase family.

It is found in the cytoplasm. It catalyses the reaction L-glutamate 5-semialdehyde + phosphate + NADP(+) = L-glutamyl 5-phosphate + NADPH + H(+). It functions in the pathway amino-acid biosynthesis; L-proline biosynthesis; L-glutamate 5-semialdehyde from L-glutamate: step 2/2. Catalyzes the NADPH-dependent reduction of L-glutamate 5-phosphate into L-glutamate 5-semialdehyde and phosphate. The product spontaneously undergoes cyclization to form 1-pyrroline-5-carboxylate. This chain is Gamma-glutamyl phosphate reductase, found in Paraburkholderia xenovorans (strain LB400).